Reading from the N-terminus, the 163-residue chain is Norbelladine synthase (163 aa).

Residue 68 to 71 coordinates tyramine; that stretch reads YHKE. The active-site Proton donor is the K83.

The protein belongs to the BetVI family. In terms of tissue distribution, mostly expressed in bulbs, and, to a lower extent, in roots, stems, leaves and flowers.

The catalysed reaction is 3,4-dihydroxybenzaldehyde + tyramine + AH2 = norbelladine + A + H2O. The protein operates within alkaloid biosynthesis. In terms of biological role, catalyzes the condensation of tyramine and 3,4-dihydroxybenzaldehyde (3,4-DHBA) to form norbelladine, the common precursor to all Amaryllidaceae alkaloids such as galanthamine, lycorine and haemanthamine, and including haemanthamine- and crinamine-type alkaloids, promising anticancer agents. This Narcissus pseudonarcissus (Daffodil) protein is Norbelladine synthase.